The sequence spans 613 residues: Leucine-rich repeat and immunoglobulin-like domain-containing nogo receptor-interacting protein 1 (613 aa).

A signal peptide spans 1–34 (MLAGEASMRSPILACWQPILLLMLGSILSGSATG). 2 disulfide bridges follow: Cys-35-Cys-41 and Cys-39-Cys-50. The region spanning 35–64 (CPPRCECSAQERAVLCHRKRFMVVPEGIPT) is the LRRNT domain. The Extracellular portion of the chain corresponds to 35–554 (CPPRCECSAQ…FDIKTLIIAT (520 aa)). LRR repeat units follow at residues 65–86 (ETRQ…EFAN), 89–110 (HLEE…AFNN), 113–134 (NLRT…VFTG), 137–158 (NLTK…MFQD), 161–182 (NLKS…AFSG), 185–206 (SLEQ…ALSH), 209–230 (GLIV…SFKR), 257–278 (NLTS…SVRH), 281–302 (YLRF…MLHD), 305–326 (RLQE…AFRG), and 329–350 (YLRI…AFHS). Asn-137 carries an N-linked (GlcNAc...) asparagine glycan. A glycan (N-linked (GlcNAc...) asparagine) is linked at Asn-195. 3 N-linked (GlcNAc...) asparagine glycosylation sites follow: Asn-257, Asn-267, and Asn-286. The N-linked (GlcNAc...) asparagine glycan is linked to Asn-334. An LRRCT domain is found at 362–416 (NPLACDCRLLWVFRRRWRLNFNKQQPTCSTPEFVQGKEFKDFPDVLLPNYFTCRR). Intrachain disulfides connect Cys-366–Cys-389, Cys-368–Cys-414, and Cys-439–Cys-490. The 105-residue stretch at 404–508 (PDVLLPNYFT…DTMLAHLHVR (105 aa)) folds into the Ig-like C2-type domain. N-linked (GlcNAc...) asparagine glycans are attached at residues Asn-485, Asn-498, Asn-519, Asn-530, and Asn-535. Residues 555 to 575 (TMGFISFLGVVLFCLVLLFLW) traverse the membrane as a helical segment. At 576–613 (SRGKGNTKHNIEIEYVPRKSDAGISSADAPRKFNMKMI) the chain is on the cytoplasmic side.

As to quaternary structure, homotetramer. Forms ternary complex with RTN4R/NGFR and RTN4R/TNFRSF19. In terms of processing, N-glycosylated. Contains predominantly high-mannose glycans.

It localises to the cell membrane. Functional component of the Nogo receptor signaling complex (RTN4R/NGFR) in RhoA activation responsible for some inhibition of axonal regeneration by myelin-associated factors. Is also an important negative regulator of oligodentrocyte differentiation and axonal myelination. This chain is Leucine-rich repeat and immunoglobulin-like domain-containing nogo receptor-interacting protein 1 (LINGO1), found in Gallus gallus (Chicken).